Reading from the N-terminus, the 418-residue chain is Torsin-4A-B (418 aa).

A helical transmembrane segment spans residues 128-144 (CLLLFVGIVCFQIFNAI). An ATP-binding site is contributed by 200–207 (GPSGVGKS).

This sequence belongs to the ClpA/ClpB family. Torsin subfamily.

Its subcellular location is the membrane. This Xenopus laevis (African clawed frog) protein is Torsin-4A-B (tor4a-b).